The chain runs to 2443 residues: Spatacsin (2443 aa).

Position 1955 is a phosphoserine (Ser1955).

As to quaternary structure, interacts with AP5Z1, AP5B1, AP5S1 and ZFYVE26. As to expression, expressed in all structures of brain, with a high expression in cerebellum. Expressed in cortical projection neurons.

Its subcellular location is the cytoplasm. The protein localises to the cytosol. It is found in the nucleus. It localises to the cell projection. The protein resides in the axon. Its subcellular location is the dendrite. Its function is as follows. May play a role in neurite plasticity by maintaining cytoskeleton stability and regulating synaptic vesicle transport. This Homo sapiens (Human) protein is Spatacsin (SPG11).